A 248-amino-acid chain; its full sequence is uncharacterized protein (248 aa).

Position 9-33 (9-33 (IITGASSGIGEATAILLAEKGAKLV)) interacts with NADP(+). Ser141 provides a ligand contact to substrate. Residue Tyr154 is the Proton acceptor of the active site.

Belongs to the short-chain dehydrogenases/reductases (SDR) family.

This is an uncharacterized protein from Listeria innocua serovar 6a (strain ATCC BAA-680 / CLIP 11262).